The primary structure comprises 466 residues: Ribosomal protein uS12 methylthiotransferase RimO (466 aa).

In terms of domain architecture, MTTase N-terminal spans 18 to 133 (PRIGFVSLGC…VMDAVHQHVP (116 aa)). Residues cysteine 27, cysteine 63, cysteine 92, cysteine 164, cysteine 168, and cysteine 171 each contribute to the [4Fe-4S] cluster site. The Radical SAM core domain occupies 150-391 (LTPKHYAYLK…MAVAEAVSTA (242 aa)). In terms of domain architecture, TRAM spans 394-466 (QRRVGSSMQV…QGHDLIGELI (73 aa)).

The protein belongs to the methylthiotransferase family. RimO subfamily. The cofactor is [4Fe-4S] cluster.

It localises to the cytoplasm. The catalysed reaction is L-aspartate(89)-[ribosomal protein uS12]-hydrogen + (sulfur carrier)-SH + AH2 + 2 S-adenosyl-L-methionine = 3-methylsulfanyl-L-aspartate(89)-[ribosomal protein uS12]-hydrogen + (sulfur carrier)-H + 5'-deoxyadenosine + L-methionine + A + S-adenosyl-L-homocysteine + 2 H(+). Catalyzes the methylthiolation of an aspartic acid residue of ribosomal protein uS12. This is Ribosomal protein uS12 methylthiotransferase RimO from Leptothrix cholodnii (strain ATCC 51168 / LMG 8142 / SP-6) (Leptothrix discophora (strain SP-6)).